A 91-amino-acid polypeptide reads, in one-letter code: Probable Fe(2+)-trafficking protein (91 aa).

The protein belongs to the Fe(2+)-trafficking protein family.

Could be a mediator in iron transactions between iron acquisition and iron-requiring processes, such as synthesis and/or repair of Fe-S clusters in biosynthetic enzymes. This is Probable Fe(2+)-trafficking protein from Histophilus somni (strain 129Pt) (Haemophilus somnus).